Here is a 299-residue protein sequence, read N- to C-terminus: NADH-cytochrome b5 reductase 2 (299 aa).

The helical transmembrane segment at 13–35 threads the bilayer; that stretch reads SFKVLAPFAAAVGSVGIAYQYST. The region spanning 50 to 154 is the FAD-binding FR-type domain; it reads DEWIDLKLAK…KGPVVKWKWE (105 aa). Position 157–192 (157–192) interacts with FAD; it reads QYKSIALIGGGTGITPLYQLMHEITKNPEDKTKVNL.

It belongs to the flavoprotein pyridine nucleotide cytochrome reductase family. Requires FAD as cofactor.

It is found in the mitochondrion outer membrane. The catalysed reaction is 2 Fe(III)-[cytochrome b5] + NADH = 2 Fe(II)-[cytochrome b5] + NAD(+) + H(+). Functionally, may mediate the reduction of outer membrane cytochrome b5. The protein is NADH-cytochrome b5 reductase 2 (MCR1) of Debaryomyces hansenii (strain ATCC 36239 / CBS 767 / BCRC 21394 / JCM 1990 / NBRC 0083 / IGC 2968) (Yeast).